Consider the following 165-residue polypeptide: Cyclic pyranopterin monophosphate synthase (165 aa).

Substrate-binding positions include 79-81 and 117-118; these read LCH and ME. The active site involves aspartate 132.

The protein belongs to the MoaC family. In terms of assembly, homohexamer; trimer of dimers.

The catalysed reaction is (8S)-3',8-cyclo-7,8-dihydroguanosine 5'-triphosphate = cyclic pyranopterin phosphate + diphosphate. Its pathway is cofactor biosynthesis; molybdopterin biosynthesis. Functionally, catalyzes the conversion of (8S)-3',8-cyclo-7,8-dihydroguanosine 5'-triphosphate to cyclic pyranopterin monophosphate (cPMP). The chain is Cyclic pyranopterin monophosphate synthase from Chloroflexus aggregans (strain MD-66 / DSM 9485).